The sequence spans 130 residues: Mating-type-like protein A1 (130 aa).

Positions 68-127 (TYTTRKPLPAKAKLQLVETFSKKRYLTRCEKHQLAVQCGITTNQVQIWFANRRKRSKDLN) form a DNA-binding region, homeobox.

It belongs to the MATA1 family.

Its subcellular location is the nucleus. Mating type proteins are sequence specific DNA-binding proteins that act as master switches in yeast differentiation by controlling gene expression in a cell type-specific fashion. The polypeptide is Mating-type-like protein A1 (MTL1A1) (Candida glabrata (strain ATCC 2001 / BCRC 20586 / JCM 3761 / NBRC 0622 / NRRL Y-65 / CBS 138) (Yeast)).